The following is a 343-amino-acid chain: Heat-inducible transcription repressor HrcA (343 aa).

It belongs to the HrcA family.

Functionally, negative regulator of class I heat shock genes (grpE-dnaK-dnaJ and groELS operons). Prevents heat-shock induction of these operons. In Natranaerobius thermophilus (strain ATCC BAA-1301 / DSM 18059 / JW/NM-WN-LF), this protein is Heat-inducible transcription repressor HrcA.